We begin with the raw amino-acid sequence, 1597 residues long: Pentafunctional AROM polypeptide (1597 aa).

The tract at residues 1 to 384 (MGVPTKISIL…HEPRASTVSN (384 aa)) is 3-dehydroquinate synthase. Residues 44–46 (DTN), 81–84 (ESSK), 114–116 (GGV), and Asp-119 contribute to the NAD(+) site. Arg-130 is a 7-phospho-2-dehydro-3-deoxy-D-arabino-heptonate binding site. 139 to 140 (TT) contributes to the NAD(+) binding site. 7-phospho-2-dehydro-3-deoxy-D-arabino-heptonate-binding residues include Asp-146 and Lys-152. Lys-161 lines the NAD(+) pocket. Asn-162 provides a ligand contact to 7-phospho-2-dehydro-3-deoxy-D-arabino-heptonate. NAD(+)-binding positions include 179 to 182 (FLNT) and Asn-190. Residue Glu-194 coordinates Zn(2+). 7-phospho-2-dehydro-3-deoxy-D-arabino-heptonate is bound by residues 194–197 (EVIK) and Lys-250. Residue Glu-260 is the Proton acceptor; for 3-dehydroquinate synthase activity of the active site. 7-phospho-2-dehydro-3-deoxy-D-arabino-heptonate contacts are provided by residues 264–268 (RNLLN) and His-271. His-271 is a binding site for Zn(2+). His-275 serves as the catalytic Proton acceptor; for 3-dehydroquinate synthase activity. Positions 287 and 356 each coordinate 7-phospho-2-dehydro-3-deoxy-D-arabino-heptonate. His-287 lines the Zn(2+) pocket. Residues 397–842 (VSPGVPKNLN…WDSLAQTFKV (446 aa)) are EPSP synthase. Cys-824 functions as the For EPSP synthase activity in the catalytic mechanism. The interval 866–1057 (ASIFIIGMRG…RSKENTFFVS (192 aa)) is shikimate kinase. 872-879 (GMRGAGKT) contacts ATP. Positions 1058-1278 (LTLPDLAPAA…AAPGQLSARE (221 aa)) are 3-dehydroquinase. His-1181 functions as the Proton acceptor; for 3-dehydroquinate dehydratase activity in the catalytic mechanism. Catalysis depends on Lys-1209, which acts as the Schiff-base intermediate with substrate; for 3-dehydroquinate dehydratase activity. The shikimate dehydrogenase stretch occupies residues 1291–1597 (SKKFAVIGNP…VQPKDDDIST (307 aa)).

In the N-terminal section; belongs to the sugar phosphate cyclases superfamily. Dehydroquinate synthase family. This sequence in the 2nd section; belongs to the EPSP synthase family. The protein in the 3rd section; belongs to the shikimate kinase family. It in the 4th section; belongs to the type-I 3-dehydroquinase family. In the C-terminal section; belongs to the shikimate dehydrogenase family. In terms of assembly, homodimer. Zn(2+) serves as cofactor.

Its subcellular location is the cytoplasm. It catalyses the reaction 7-phospho-2-dehydro-3-deoxy-D-arabino-heptonate = 3-dehydroquinate + phosphate. It carries out the reaction 3-dehydroquinate = 3-dehydroshikimate + H2O. The catalysed reaction is shikimate + NADP(+) = 3-dehydroshikimate + NADPH + H(+). The enzyme catalyses shikimate + ATP = 3-phosphoshikimate + ADP + H(+). It catalyses the reaction 3-phosphoshikimate + phosphoenolpyruvate = 5-O-(1-carboxyvinyl)-3-phosphoshikimate + phosphate. It functions in the pathway metabolic intermediate biosynthesis; chorismate biosynthesis; chorismate from D-erythrose 4-phosphate and phosphoenolpyruvate: step 2/7. Its pathway is metabolic intermediate biosynthesis; chorismate biosynthesis; chorismate from D-erythrose 4-phosphate and phosphoenolpyruvate: step 3/7. It participates in metabolic intermediate biosynthesis; chorismate biosynthesis; chorismate from D-erythrose 4-phosphate and phosphoenolpyruvate: step 4/7. The protein operates within metabolic intermediate biosynthesis; chorismate biosynthesis; chorismate from D-erythrose 4-phosphate and phosphoenolpyruvate: step 5/7. It functions in the pathway metabolic intermediate biosynthesis; chorismate biosynthesis; chorismate from D-erythrose 4-phosphate and phosphoenolpyruvate: step 6/7. In terms of biological role, the AROM polypeptide catalyzes 5 consecutive enzymatic reactions in prechorismate polyaromatic amino acid biosynthesis. This Ajellomyces dermatitidis (strain ER-3 / ATCC MYA-2586) (Blastomyces dermatitidis) protein is Pentafunctional AROM polypeptide.